Here is a 122-residue protein sequence, read N- to C-terminus: Large ribosomal subunit protein uL14 (122 aa).

It belongs to the universal ribosomal protein uL14 family. Part of the 50S ribosomal subunit. Forms a cluster with proteins L3 and L19. In the 70S ribosome, L14 and L19 interact and together make contacts with the 16S rRNA in bridges B5 and B8.

Its function is as follows. Binds to 23S rRNA. Forms part of two intersubunit bridges in the 70S ribosome. In Methylobacterium sp. (strain 4-46), this protein is Large ribosomal subunit protein uL14.